A 469-amino-acid polypeptide reads, in one-letter code: Glutamate--tRNA ligase (469 aa).

The short motif at Pro-9–Gly-19 is the 'HIGH' region element. The Zn(2+) site is built by Cys-98, Cys-100, Cys-125, and Asp-127. A 'KMSKS' region motif is present at residues Lys-236–Arg-240. Lys-239 lines the ATP pocket.

This sequence belongs to the class-I aminoacyl-tRNA synthetase family. Glutamate--tRNA ligase type 1 subfamily. As to quaternary structure, monomer. The cofactor is Zn(2+).

Its subcellular location is the cytoplasm. It catalyses the reaction tRNA(Glu) + L-glutamate + ATP = L-glutamyl-tRNA(Glu) + AMP + diphosphate. In terms of biological role, catalyzes the attachment of glutamate to tRNA(Glu) in a two-step reaction: glutamate is first activated by ATP to form Glu-AMP and then transferred to the acceptor end of tRNA(Glu). This is Glutamate--tRNA ligase from Shewanella woodyi (strain ATCC 51908 / MS32).